Consider the following 489-residue polypeptide: Probable cytosol aminopeptidase (489 aa).

Positions 254 and 259 each coordinate Mn(2+). Lysine 266 is an active-site residue. 3 residues coordinate Mn(2+): aspartate 277, aspartate 336, and glutamate 338. Arginine 340 is a catalytic residue.

The protein belongs to the peptidase M17 family. Requires Mn(2+) as cofactor.

The protein localises to the cytoplasm. It catalyses the reaction Release of an N-terminal amino acid, Xaa-|-Yaa-, in which Xaa is preferably Leu, but may be other amino acids including Pro although not Arg or Lys, and Yaa may be Pro. Amino acid amides and methyl esters are also readily hydrolyzed, but rates on arylamides are exceedingly low.. It carries out the reaction Release of an N-terminal amino acid, preferentially leucine, but not glutamic or aspartic acids.. Its function is as follows. Presumably involved in the processing and regular turnover of intracellular proteins. Catalyzes the removal of unsubstituted N-terminal amino acids from various peptides. The polypeptide is Probable cytosol aminopeptidase (Cereibacter sphaeroides (strain ATCC 17025 / ATH 2.4.3) (Rhodobacter sphaeroides)).